The chain runs to 172 residues: Putative RNA polymerase II transcriptional coactivator (172 aa).

2 disordered regions span residues 1–43 (MPPK…QDGN) and 123–172 (QTDA…DDDE). Positions 24-43 (GNTGKAQPQELTKGSDQDGN) are enriched in polar residues. A compositionally biased stretch (basic and acidic residues) spans 131–144 (PKVKALESNKESIK). Positions 158-172 (TSDEEEAAEDEDDDE) are enriched in acidic residues.

The protein belongs to the transcriptional coactivator PC4 family.

Its subcellular location is the nucleus. Its function is as follows. General coactivator that functions cooperatively with TAFs and mediates functional interactions between upstream activators and the general transcriptional machinery. Binds single-stranded DNA. The chain is Putative RNA polymerase II transcriptional coactivator from Neurospora crassa (strain ATCC 24698 / 74-OR23-1A / CBS 708.71 / DSM 1257 / FGSC 987).